Reading from the N-terminus, the 128-residue chain is EPIDERMAL PATTERNING FACTOR-like protein 2 (128 aa).

Residues 1–28 (MVWSSNMSSFLLILLILNSTHFSLMANG) form the signal peptide. 3 disulfide bridges follow: Cys-60–Cys-119, Cys-65–Cys-71, and Cys-68–Cys-121. The span at 79-90 (NPQTKLHSPLTT) shows a compositional bias: polar residues. Positions 79–100 (NPQTKLHSPLTTSSSSSSETIH) are disordered.

The protein belongs to the plant cysteine rich small secretory peptide family. Epidermal patterning factor subfamily.

Its subcellular location is the secreted. In terms of biological role, controls stomatal patterning. In Arabidopsis thaliana (Mouse-ear cress), this protein is EPIDERMAL PATTERNING FACTOR-like protein 2.